The sequence spans 526 residues: GMP synthase [glutamine-hydrolyzing] (526 aa).

Residues 14–208 enclose the Glutamine amidotransferase type-1 domain; sequence SILIVDFGSQ…VHDICGLAGD (195 aa). C91 acts as the Nucleophile in catalysis. Residues H182 and E184 contribute to the active site. The region spanning 209–401 is the GMPS ATP-PPase domain; the sequence is WTMAEFRQTK…LGMPDVFVDR (193 aa). 236–242 contacts ATP; sequence SGGVDSS.

In terms of assembly, homodimer.

The enzyme catalyses XMP + L-glutamine + ATP + H2O = GMP + L-glutamate + AMP + diphosphate + 2 H(+). The protein operates within purine metabolism; GMP biosynthesis; GMP from XMP (L-Gln route): step 1/1. In terms of biological role, catalyzes the synthesis of GMP from XMP. In Zymomonas mobilis subsp. mobilis (strain ATCC 31821 / ZM4 / CP4), this protein is GMP synthase [glutamine-hydrolyzing].